A 307-amino-acid polypeptide reads, in one-letter code: MLRVVEGIFIFVVISESVFGVLGNGFIGLVNCIDCAKNKLSTIGFILTGLAISRIFLIWIIITDGFIQIFSPNIYASSNLIEYISYFWVIGNQSSMWFATSLSIFYFLKIANFSNYIFLWLKSRTNMVLPFMIVFLLISSLLNFAYIAKILNDYKMKNDTVWDLNMYKSEYFIKQILLNLGVIFFFTLSLITCVLLIISLWRHNRQMQSNVTGLRDSNTEAHVKAMKVLISFIILFILYFIGMAIEISYFTVRENKLLLMFGMTTTAIYPWGHSFILILGNSKLKQASLRVLQQLKCCEKRKNLRVT.

Residues 1 to 6 lie on the Extracellular side of the membrane; sequence MLRVVE. Residues 7–27 form a helical membrane-spanning segment; that stretch reads GIFIFVVISESVFGVLGNGFI. Topologically, residues 28–42 are cytoplasmic; sequence GLVNCIDCAKNKLST. A helical transmembrane segment spans residues 43–63; that stretch reads IGFILTGLAISRIFLIWIIIT. Residues 64 to 100 lie on the Extracellular side of the membrane; it reads DGFIQIFSPNIYASSNLIEYISYFWVIGNQSSMWFAT. A helical membrane pass occupies residues 101 to 121; that stretch reads SLSIFYFLKIANFSNYIFLWL. At 122 to 126 the chain is on the cytoplasmic side; sequence KSRTN. The helical transmembrane segment at 127-147 threads the bilayer; it reads MVLPFMIVFLLISSLLNFAYI. Topologically, residues 148-179 are extracellular; that stretch reads AKILNDYKMKNDTVWDLNMYKSEYFIKQILLN. Asparagine 158 carries an N-linked (GlcNAc...) asparagine glycan. Residues 180–200 traverse the membrane as a helical segment; sequence LGVIFFFTLSLITCVLLIISL. Over 201–227 the chain is Cytoplasmic; it reads WRHNRQMQSNVTGLRDSNTEAHVKAMK. The chain crosses the membrane as a helical span at residues 228-248; it reads VLISFIILFILYFIGMAIEIS. Topologically, residues 249 to 257 are extracellular; sequence YFTVRENKL. The chain crosses the membrane as a helical span at residues 258–278; that stretch reads LLMFGMTTTAIYPWGHSFILI. Residues 279–307 lie on the Cytoplasmic side of the membrane; it reads LGNSKLKQASLRVLQQLKCCEKRKNLRVT.

The protein belongs to the G-protein coupled receptor T2R family.

Its subcellular location is the membrane. Functionally, receptor that may play a role in the perception of bitterness and is gustducin-linked. May play a role in sensing the chemical composition of the gastrointestinal content. The activity of this receptor may stimulate alpha gustducin, mediate PLC-beta-2 activation and lead to the gating of TRPM5. The polypeptide is Taste receptor type 2 member 10 (TAS2R10) (Pan paniscus (Pygmy chimpanzee)).